We begin with the raw amino-acid sequence, 116 residues long: Guanylin (116 aa).

Residues 1–23 (MNACVLSVLCLLGALAVLVEGVT) form the signal peptide. Residues 24–101 (VQDGDLSFPL…LQRLEAIAQD (78 aa)) constitute a propeptide that is removed on maturation. Cystine bridges form between C69/C83, C105/C113, and C108/C116.

This sequence belongs to the guanylin family. Localized in both crypts and villi in the small intestine and to superficial epithelial cells in the colon.

It is found in the secreted. Its function is as follows. Endogenous activator of intestinal guanylate cyclase. It stimulates this enzyme through the same receptor binding region as the heat-stable enterotoxins. The chain is Guanylin (Guca2a) from Mus musculus (Mouse).